We begin with the raw amino-acid sequence, 130 residues long: Small ribosomal subunit protein uS9 (130 aa).

The protein belongs to the universal ribosomal protein uS9 family.

The sequence is that of Small ribosomal subunit protein uS9 from Hamiltonella defensa subsp. Acyrthosiphon pisum (strain 5AT).